Consider the following 553-residue polypeptide: Cytochrome P450 86A22 (553 aa).

Residues 8–24 (MIVAIVAAYLLWFKSIT) form a helical membrane-spanning segment. Position 459 (C459) interacts with heme.

Belongs to the cytochrome P450 family. The cofactor is heme. As to expression, mostly expressed in the developing stigma of floral buds. Weakly detected in leaves, stems and flowers.

The protein localises to the membrane. The enzyme catalyses (9Z)-octadecenoyl-CoA + reduced [NADPH--hemoprotein reductase] + O2 = (9Z)-18-hydroxyoctadecenoyl-CoA + oxidized [NADPH--hemoprotein reductase] + H2O + H(+). It catalyses the reaction (9Z,12Z)-octadecadienoyl-CoA + reduced [NADPH--hemoprotein reductase] + O2 = (9Z,12Z)-18-hydroxyoctadecadienoyl-CoA + oxidized [NADPH--hemoprotein reductase] + H2O + H(+). Functionally, fatty acyl-CoA omega-hydroxylase essential for the production of omega-hydroxy fatty acids and the biosynthesis of triacylglycerol-/diacylglycerol-based estolide polyesters in the stigma. Substrate preference is 16:0-CoA &gt; 18:1-CoA &gt; 18:0-CoA. This Petunia hybrida (Petunia) protein is Cytochrome P450 86A22.